We begin with the raw amino-acid sequence, 356 residues long: Dual-specificity RNA methyltransferase RlmN (356 aa).

Residue glutamate 89 is the Proton acceptor of the active site. The region spanning 108–341 (SHARYTICVS…CTIRESKGLD (234 aa)) is the Radical SAM core domain. A disulfide bridge connects residues cysteine 115 and cysteine 346. [4Fe-4S] cluster contacts are provided by cysteine 122, cysteine 126, and cysteine 129. Residues 172-173 (GE), serine 204, 227-229 (SLH), and asparagine 303 contribute to the S-adenosyl-L-methionine site. The S-methylcysteine intermediate role is filled by cysteine 346.

The protein belongs to the radical SAM superfamily. RlmN family. [4Fe-4S] cluster serves as cofactor.

The protein localises to the cytoplasm. It carries out the reaction adenosine(2503) in 23S rRNA + 2 reduced [2Fe-2S]-[ferredoxin] + 2 S-adenosyl-L-methionine = 2-methyladenosine(2503) in 23S rRNA + 5'-deoxyadenosine + L-methionine + 2 oxidized [2Fe-2S]-[ferredoxin] + S-adenosyl-L-homocysteine. It catalyses the reaction adenosine(37) in tRNA + 2 reduced [2Fe-2S]-[ferredoxin] + 2 S-adenosyl-L-methionine = 2-methyladenosine(37) in tRNA + 5'-deoxyadenosine + L-methionine + 2 oxidized [2Fe-2S]-[ferredoxin] + S-adenosyl-L-homocysteine. Specifically methylates position 2 of adenine 2503 in 23S rRNA and position 2 of adenine 37 in tRNAs. m2A2503 modification seems to play a crucial role in the proofreading step occurring at the peptidyl transferase center and thus would serve to optimize ribosomal fidelity. The protein is Dual-specificity RNA methyltransferase RlmN of Campylobacter jejuni (strain RM1221).